The primary structure comprises 195 residues: Endoribonuclease YbeY (195 aa).

The Zn(2+) site is built by His-153, His-157, and His-163.

Belongs to the endoribonuclease YbeY family. The cofactor is Zn(2+).

The protein resides in the cytoplasm. Single strand-specific metallo-endoribonuclease involved in late-stage 70S ribosome quality control and in maturation of the 3' terminus of the 16S rRNA. The chain is Endoribonuclease YbeY from Prochlorococcus marinus (strain SARG / CCMP1375 / SS120).